Here is a 596-residue protein sequence, read N- to C-terminus: UDP-glucuronate:xylan alpha-glucuronosyltransferase 2 (596 aa).

A helical; Signal-anchor for type II membrane protein transmembrane segment spans residues 17 to 37; sequence LIRFNLVLLGFSFLLYTAIFF. Positions 395 and 397 each coordinate Mn(2+). Residues 395–397, 424–426, 451–455, and 504–509 each bind substrate; these read DAD, NSG, NGGDQ, and HYLGWK. Histidine 504 provides a ligand contact to Mn(2+).

Belongs to the glycosyltransferase 8 family. Glycogenin subfamily. Mn(2+) serves as cofactor.

It localises to the golgi apparatus membrane. Functionally, glycosyltransferase required for the addition of both glucuronic acid and 4-O-methylglucuronic acid branches to xylan in stem cell walls. In association with GUX1, is responsible for almost all of the substitutions of the xylan backbone in stem glucuronoxylan. The sequence is that of UDP-glucuronate:xylan alpha-glucuronosyltransferase 2 (GUX2) from Arabidopsis thaliana (Mouse-ear cress).